Consider the following 431-residue polypeptide: Enolase (431 aa).

(2R)-2-phosphoglycerate is bound at residue Gln166. Glu208 acts as the Proton donor in catalysis. Mg(2+)-binding residues include Asp245, Glu288, and Asp315. Lys340, Arg369, Ser370, and Lys391 together coordinate (2R)-2-phosphoglycerate. Lys340 (proton acceptor) is an active-site residue.

Belongs to the enolase family. Mg(2+) is required as a cofactor.

Its subcellular location is the cytoplasm. It is found in the secreted. It localises to the cell surface. It carries out the reaction (2R)-2-phosphoglycerate = phosphoenolpyruvate + H2O. It participates in carbohydrate degradation; glycolysis; pyruvate from D-glyceraldehyde 3-phosphate: step 4/5. In terms of biological role, catalyzes the reversible conversion of 2-phosphoglycerate (2-PG) into phosphoenolpyruvate (PEP). It is essential for the degradation of carbohydrates via glycolysis. The sequence is that of Enolase from Clostridium botulinum (strain Kyoto / Type A2).